A 247-amino-acid polypeptide reads, in one-letter code: MNVILCSSNMLKGLYDISGVEVGQHLYWQIGGFQVHAQVLITSWVVIAILLGSVTVAVRNPQTIPTNGQNFFEYVLEFIRDLSKTQIGEEYGPWVPFIGTMFLFIFVSNWSGALLPWKLIELPHGELAAPTNDINTTVALALPTSVAYFYAGLTKKGLGYFGKYIQPTPILLPINILEDFTKPLSLSFRLFGNILADELVVVVLVSLVPLVVPIPVMFLGLFTSGIQALIFATLAAAYIGESMEGHH.

Transmembrane regions (helical) follow at residues 38–58 (QVLITSWVVIAILLGSVTVAV), 95–115 (VPFIGTMFLFIFVSNWSGALL), 134–154 (INTTVALALPTSVAYFYAGLT), 199–219 (LVVVVLVSLVPLVVPIPVMFL), and 220–240 (GLFTSGIQALIFATLAAAYIG).

This sequence belongs to the ATPase A chain family. In terms of assembly, F-type ATPases have 2 components, CF(1) - the catalytic core - and CF(0) - the membrane proton channel. CF(1) has five subunits: alpha(3), beta(3), gamma(1), delta(1), epsilon(1). CF(0) has four main subunits: a, b, b' and c.

It is found in the plastid. It localises to the chloroplast thylakoid membrane. Key component of the proton channel; it plays a direct role in the translocation of protons across the membrane. The protein is ATP synthase subunit a, chloroplastic of Acorus calamus var. americanus (American sweet flag).